Consider the following 553-residue polypeptide: Non-SCF-type F-box protein ROY1 (553 aa).

The F-box domain maps to Phe3–Ile49.

Interacts with SKP1 and YPT32; SKP1 is required for the interaction with YPT32.

The protein resides in the cytoplasm. The protein localises to the nucleus. It localises to the cytoplasmic vesicle membrane. In terms of biological role, non-SCF-type F-box protein involved in the endocytic with the vacuolar sorting pathway. Acts as a repressor of YPT52 by inhibiting the formation of active, GTP-bound, YPT52. Involved in the defense mechanism against methylmercury toxicity. The chain is Non-SCF-type F-box protein ROY1 (ROY1) from Saccharomyces cerevisiae (strain ATCC 204508 / S288c) (Baker's yeast).